Reading from the N-terminus, the 480-residue chain is Cysteine--tRNA ligase (480 aa).

Cysteine 29 serves as a coordination point for Zn(2+). The 'HIGH' region motif lies at 31–41; that stretch reads PTVYADPHLGH. The Zn(2+) site is built by cysteine 220, histidine 245, and glutamate 249. A 'KMSKS' region motif is present at residues 276 to 280; the sequence is KMAKS. Lysine 279 serves as a coordination point for ATP.

This sequence belongs to the class-I aminoacyl-tRNA synthetase family. As to quaternary structure, monomer. It depends on Zn(2+) as a cofactor.

The protein localises to the cytoplasm. The catalysed reaction is tRNA(Cys) + L-cysteine + ATP = L-cysteinyl-tRNA(Cys) + AMP + diphosphate. The sequence is that of Cysteine--tRNA ligase from Thermus thermophilus (strain ATCC 27634 / DSM 579 / HB8).